We begin with the raw amino-acid sequence, 841 residues long: Toll-like receptor 4 (841 aa).

The signal sequence occupies residues 1-23 (MMARARLAAALIPATAILSCLRT). Topologically, residues 24–632 (ESWDPCVQVV…FRNATCQLSK (609 aa)) are extracellular. Residues Cys29 and Cys40 are joined by a disulfide bond. Residues Asn35 and Asn73 are each glycosylated (N-linked (GlcNAc...) asparagine). 7 LRR repeats span residues 55–76 (STKM…NFSS), 79–100 (ELQV…TFQG), 103–124 (HLST…AFSG), 127–148 (SLQK…PIGH), 151–172 (NLKE…EYFS), 176–197 (NLEH…DVKV), and 205–225 (NLSL…TFKE). 4 N-linked (GlcNAc...) asparagine glycosylation sites follow: Asn205, Asn238, Asn282, and Asn309. Cys281 and Cys306 are joined by a disulfide. LRR repeat units follow at residues 352 to 373 (SLKK…FQLP), 374 to 394 (SLQY…CSHT), 400 to 422 (NLKH…MGLE), 423 to 444 (QLEH…SAFL), 448 to 469 (NLRY…IFTG), 472 to 495 (SLQT…FTEL), 497 to 518 (NLTV…AFHS), 521 to 542 (SLQV…LYEP), and 545 to 568 (SLRI…QNLP). Cys390 and Cys391 are oxidised to a cystine. N-linked (GlcNAc...) asparagine glycans are attached at residues Asn497 and Asn526. The N-linked (GlcNAc...) asparagine glycan is linked to Asn575. The LRRCT domain maps to 579 to 630 (NAFACVCEHQSFLQWVKDQRQLLVGAEQMMCAEPLDMEDMPVLSFRNATCQL). 2 disulfides stabilise this stretch: Cys583–Cys609 and Cys585–Cys628. The N-linked (GlcNAc...) asparagine glycan is linked to Asn625. A helical transmembrane segment spans residues 633–653 (TIISVSVVTVLLVSVVGVLVY). At 654–841 (KFYFHLMLLA…TNPQEATTST (188 aa)) the chain is on the cytoplasmic side. One can recognise a TIR domain in the interval 673 to 816 (SIYDAFVIYS…VFWRRLRKAL (144 aa)). Positions 820–841 (KPQSPEGTADAETNPQEATTST) are disordered. Positions 830-841 (AETNPQEATTST) are enriched in polar residues.

The protein belongs to the Toll-like receptor family. As to quaternary structure, belongs to the lipopolysaccharide (LPS) receptor, a multi-protein complex containing at least CD14, LY96 and TLR4. Binding to bacterial LPS leads to homodimerization. Interacts with LY96 via the extracellular domain. Interacts with MYD88 and TIRAP via their respective TIR domains. Interacts with TICAM2. Interacts with NOX4. Interacts with CNPY3 and HSP90B1; this interaction is required for proper folding in the endoplasmic reticulum. Interacts with MAP3K21; this interaction leads to negative regulation of TLR4 signaling. Interacts with CD36, following CD36 stimulation by oxLDL or amyloid-beta 42, and forms a heterodimer with TLR6. The trimeric complex is internalized and triggers inflammatory response. LYN kinase activity facilitates TLR4-TLR6 heterodimerization and signal initiation. Interacts with TICAM1 in response to LPS in a WDFY1-dependent manner. Interacts with WDFY1 in response to LPS. Interacts with SMPDL3B. Interacts with CEACAM1; upon lipopolysaccharide stimulation, forms a complex including TLR4 and the phosphorylated form of SYK and CEACAM1, which in turn, recruits PTPN6 that dephosphorylates SYK, reducing the production of reactive oxygen species (ROS) and lysosome disruption, which in turn, reduces the activity of the inflammasome. Interacts with RFTN1; the interaction occurs in response to lipopolysaccharide stimulation. Interacts with SCIMP; the interaction occurs in response to lipopolysaccharide stimulation and is enhanced by phosphorylation of SCIMP by LYN. This interaction facilitates the phosphorylation of TLR4 by LYN which elicits a selective cytokine response in macrophages. Interacts with TRAF3IP3. Interacts with TREM1; this interaction enhances TLR4-mediated inflammatory response. Interacts with ZG16B/PAUF. Interacts with CD82; this interaction inhibits TLR4-mediated signaling pathway. In terms of processing, phosphorylated on tyrosine residues by LYN after binding lipopolysaccharide. Ubiquitinated by RNF128 via 'Lys-28'-linked polyubiquitin chains, leading to proteasomal degradation.

It localises to the cell membrane. The protein localises to the early endosome. The protein resides in the cell projection. Its subcellular location is the ruffle. In terms of biological role, transmembrane receptor that functions as a pattern recognition receptor recognizing pathogen- and damage-associated molecular patterns (PAMPs and DAMPs) to induce innate immune responses via downstream signaling pathways. At the plasma membrane, cooperates with LY96 to mediate the innate immune response to bacterial lipopolysaccharide (LPS). Also involved in LPS-independent inflammatory responses triggered by free fatty acids, such as palmitate, and Ni(2+). Mechanistically, acts via MYD88, TIRAP and TRAF6, leading to NF-kappa-B activation, cytokine secretion and the inflammatory response. Alternatively, CD14-mediated TLR4 internalization via endocytosis is associated with the initiation of a MYD88-independent signaling via the TICAM1-TBK1-IRF3 axis leading to type I interferon production. In addition to the secretion of proinflammatory cytokines, initiates the activation of NLRP3 inflammasome and formation of a positive feedback loop between autophagy and NF-kappa-B signaling cascade. In complex with TLR6, promotes inflammation in monocytes/macrophages by associating with TLR6 and the receptor CD86. Upon ligand binding, such as oxLDL or amyloid-beta 42, the TLR4:TLR6 complex is internalized and triggers inflammatory response, leading to NF-kappa-B-dependent production of CXCL1, CXCL2 and CCL9 cytokines, via MYD88 signaling pathway, and CCL5 cytokine, via TICAM1 signaling pathway. In myeloid dendritic cells, vesicular stomatitis virus glycoprotein G but not LPS promotes the activation of IRF7, leading to type I IFN production in a CD14-dependent manner. This chain is Toll-like receptor 4 (TLR4), found in Bos taurus (Bovine).